Consider the following 629-residue polypeptide: tRNA uridine 5-carboxymethylaminomethyl modification enzyme MnmG (629 aa).

FAD-binding positions include 13–18 (GGGHAG), Val-125, and Ser-180. An NAD(+)-binding site is contributed by 273–287 (GPRYCPSIEDKVMRF). Gln-370 serves as a coordination point for FAD.

This sequence belongs to the MnmG family. Homodimer. Heterotetramer of two MnmE and two MnmG subunits. FAD serves as cofactor.

It localises to the cytoplasm. Functionally, NAD-binding protein involved in the addition of a carboxymethylaminomethyl (cmnm) group at the wobble position (U34) of certain tRNAs, forming tRNA-cmnm(5)s(2)U34. This is tRNA uridine 5-carboxymethylaminomethyl modification enzyme MnmG from Escherichia coli O157:H7.